The sequence spans 102 residues: Small ribosomal subunit protein uS10 (102 aa).

It belongs to the universal ribosomal protein uS10 family. As to quaternary structure, part of the 30S ribosomal subunit.

Functionally, involved in the binding of tRNA to the ribosomes. This is Small ribosomal subunit protein uS10 from Methylobacterium radiotolerans (strain ATCC 27329 / DSM 1819 / JCM 2831 / NBRC 15690 / NCIMB 10815 / 0-1).